The primary structure comprises 702 residues: Cytolytic toxin-alpha (702 aa).

Positions 2–265 are structural MACPF/CDC pore-forming domain; sequence SSDIIMAGLG…KADLLVRDIS (264 aa). 5 N-linked (GlcNAc...) asparagine glycosylation sites follow: Asn-93, Asn-100, Asn-201, Asn-287, and Asn-311. A structural FAT domain region spans residues 266-385; it reads QGLVRKVHSI…DIIEETKHKA (120 aa). Residues 386–513 are thioredoxin (THX) domain; the sequence is VLSQSQMVKD…PIISAVEKIV (128 aa). The B30.2/SPRY domain occupies 505–702; that stretch reads IISAVEKIVD…RPYHGTVRLL (198 aa). N-linked (GlcNAc...) asparagine glycosylation is present at Asn-530.

Belongs to the SNTX/VTX toxin family. In terms of assembly, heterodimer of alpha and beta subunits; non-covalently linked. Also associates into tetramers or even higher aggregates. In terms of processing, intrachain disulfide bonds may be present in the heterodimer. Expressed by the venom gland.

Its subcellular location is the secreted. Its function is as follows. This heterodimer induces potent hemolytic activities (when tested on rabbit erythrocytes, EC(50)=25-56 ng/mL) due to its ability to form pores in the cell membrane. The pore may be composed of 10 alpha/beta heterodimers. The toxin shows cardiovascular effects that include a vasorelaxant action that may involve the L-arginine-nitric oxid synthase pathway. In addition, it displays edema-inducing activities, increases vascular permeability. It also shows myotoxic activities and interferes irreversibly with neuromuscular function. It also induces irreversible platelet aggregation in rabbit or rat (but not in human or mouse) whole blood. In addition, it has been observed to increase spontaneous quantal acetylcholine release from isolated frog cutaneous pectoris motor endings. This is Cytolytic toxin-alpha from Scorpaena plumieri (Spotted scorpionfish).